A 695-amino-acid polypeptide reads, in one-letter code: Protein VP3 (695 aa).

The interval 187–255 (FMRLLRMRFA…RVSELKGSGS (69 aa)) is N7-methyltransferase activity. Positions 256–432 (YSEKKISEFD…KRPKIKITKS (177 aa)) are 2'-O-methyltransferase activity. The segment at 433–559 (LAYGAINTIF…NHIYIIPNAR (127 aa)) is N7-methyltransferase activity. Residues 560–695 (DDDNFDTFAS…MEIWDVQTWG (136 aa)) are GTase/RTPase activity.

It belongs to the rotavirus VP3 family. As to quaternary structure, interacts with VP1. Interacts with VP2.

The protein resides in the virion. It carries out the reaction a 5'-end diphospho-ribonucleoside in mRNA + GTP + H(+) = a 5'-end (5'-triphosphoguanosine)-ribonucleoside in mRNA + diphosphate. The catalysed reaction is a 5'-end (5'-triphosphoguanosine)-ribonucleoside in mRNA + S-adenosyl-L-methionine = a 5'-end (N(7)-methyl 5'-triphosphoguanosine)-ribonucleoside in mRNA + S-adenosyl-L-homocysteine. Its function is as follows. Multifunctional enzyme involved in mRNA capping. Catalyzes the formation of the 5' cap structure on the viral plus-strand transcripts. Specifically binds to GTP and displays guanylyltransferase and methyltransferase activities. Has affinity for ssRNA but not for dsRNA. Capping activity is non-specific and caps RNAs that initiate with either a G or an A residue. Together with VP1 polymerase, forms a VP1-VP3 complex positioned near the channels situated at each of the five-fold vertices of the core. Following infection, the outermost layer of the virus is lost, leaving a double-layered particle (DLP) made up of the core and VP6 shell. VP1 then catalyzes the transcription of fully conservative plus-strand genomic RNAs that are capped by VP3 and extruded through the DLP's channels into the cytoplasm where they function as mRNAs for translation of viral proteins. DLPs probably have an RNA triphosphatase activity as well, whereas open cores do not. This is Protein VP3 from Rotavirus C (isolate RVC/Cow/Japan/Shintoku/1991/G2P[3]) (RV-C).